The primary structure comprises 479 residues: Ribulose bisphosphate carboxylase large chain 2 (479 aa).

Residues N116 and T166 each coordinate substrate. The active-site Proton acceptor is K168. Residue K170 coordinates substrate. Residues K194, D196, and E197 each coordinate Mg(2+). K194 carries the N6-carboxylysine modification. The active-site Proton acceptor is the H287. Residues R288, H320, and S372 each coordinate substrate.

The protein belongs to the RuBisCO large chain family. Type I subfamily. As to quaternary structure, heterohexadecamer of 8 large chains and 8 small chains. Requires Mg(2+) as cofactor.

The catalysed reaction is 2 (2R)-3-phosphoglycerate + 2 H(+) = D-ribulose 1,5-bisphosphate + CO2 + H2O. It catalyses the reaction D-ribulose 1,5-bisphosphate + O2 = 2-phosphoglycolate + (2R)-3-phosphoglycerate + 2 H(+). Its function is as follows. RuBisCO catalyzes two reactions: the carboxylation of D-ribulose 1,5-bisphosphate, the primary event in carbon dioxide fixation, as well as the oxidative fragmentation of the pentose substrate. Both reactions occur simultaneously and in competition at the same active site. The protein is Ribulose bisphosphate carboxylase large chain 2 of Bradyrhizobium sp. (strain ORS 278).